The primary structure comprises 514 residues: MYRIVATASALIAAARAQQVCSLNTETKPALTWSKCTSSGCSDVKGSVVIDANWRWTHQTSGSTNCYTGNKWDTSICTDGKTCAEKCCLDGADYSGTYGITSSGNQLSLGFVTNGPYSKNIGSRTYLMENENTYQMFQLLGNEFTFDVDVSGIGCGLNGAPHFVSMDEDGGKAKYSGNKAGAKYGTGYCDAQCPRDVKFINGVANSEGWKPSDSDVNAGVGNLGTCCPEMDIWEANSISTAFTPHPCTKLTQHSCTGDSCGGTYSSDRYGGTCDADGCDFNAYRQGNKTFYGPGSNFNIDTTKKMTVVTQFHKGSNGRLSEITRLYVQNGKVIANSESKIAGNPGSSLTSDFCSKQKSVFGDIDDFSKKGGWNGMSDALSAPMVLVMSLWHDHHSNMLWLDSTYPTDSTKVGSQRGSCATTSGKPSDLERDVPNSKVSFSNIKFGPIGSTYKSDGTTPNPPASSSTTGSSTPTNPPAGSVDQWGQCGGQNYSGPTTCKSPFTCKKINDFYSQCQ.

A signal peptide spans 1–17 (MYRIVATASALIAAARA). Positions 18–439 (QQVCSLNTET…RDVPNSKVSF (422 aa)) are catalytic. Residue Glu-229 is the Nucleophile of the active site. The Proton donor role is filled by Glu-234. N-linked (GlcNAc...) asparagine glycosylation occurs at Asn-287. Positions 408–424 (STKVGSQRGSCATTSGK) are enriched in polar residues. Disordered regions lie at residues 408 to 433 (STKVGSQRGSCATTSGKPSDLERDVP) and 448 to 485 (GSTYKSDGTTPNPPASSSTTGSSTPTNPPAGSVDQWGQ). Residues 440-482 (SNIKFGPIGSTYKSDGTTPNPPASSSTTGSSTPTNPPAGSVDQ) are linker. The span at 462–479 (ASSSTTGSSTPTNPPAGS) shows a compositional bias: low complexity. The CBM1 domain occupies 478–514 (GSVDQWGQCGGQNYSGPTTCKSPFTCKKINDFYSQCQ). Intrachain disulfides connect Cys-486–Cys-503 and Cys-497–Cys-513. Asn-490 carries an N-linked (GlcNAc...) asparagine glycan.

It belongs to the glycosyl hydrolase 7 (cellulase C) family.

The catalysed reaction is Hydrolysis of (1-&gt;4)-beta-D-glucosidic linkages in cellulose and cellotetraose, releasing cellobiose from the non-reducing ends of the chains.. In Fusarium oxysporum (Fusarium vascular wilt), this protein is Putative exoglucanase type C.